The primary structure comprises 2894 residues: uncharacterized protein (2894 aa).

Residues 8–28 traverse the membrane as a helical segment; that stretch reads ISIFVFTILLLSNVSLGLNVS. PbH1 repeat units lie at residues 543-567, 2085-2107, 2135-2156, 2158-2180, 2201-2223, 2224-2244, 2245-2266, 2267-2289, 2290-2311, 2341-2363, 2367-2389, 2390-2419, 2422-2444, 2455-2477, 2479-2501, 2512-2542, 2550-2582, 2589-2611, 2612-2633, and 2638-2660; these read EVRW…DISL, NYPL…SMLN, FGNI…VLYK, GNGI…YSKN, ISSI…LLEN, SSSS…YLKE, NYIS…EIVN, SSNV…AIFN, GENV…LSYG, LNNL…FIYS, ASNV…YIYG, VNAI…KISG, TKGV…SLEG, VENN…YIGG, VENV…LIQE, GTNI…TVGA, NGYI…EVYG, SLEF…LIGA, SKDI…TIPN, and PYNI…DLDD.

The protein localises to the membrane. This is an uncharacterized protein from Methanocaldococcus jannaschii (strain ATCC 43067 / DSM 2661 / JAL-1 / JCM 10045 / NBRC 100440) (Methanococcus jannaschii).